Consider the following 361-residue polypeptide: Phosphoserine aminotransferase (361 aa).

Arginine 42 contacts L-glutamate. Residues alanine 76–threonine 77, tryptophan 102, threonine 152, aspartate 172, and glutamine 195 contribute to the pyridoxal 5'-phosphate site. Position 196 is an N6-(pyridoxal phosphate)lysine (lysine 196). Position 237-238 (asparagine 237–threonine 238) interacts with pyridoxal 5'-phosphate.

The protein belongs to the class-V pyridoxal-phosphate-dependent aminotransferase family. SerC subfamily. Homodimer. Pyridoxal 5'-phosphate serves as cofactor.

The protein resides in the cytoplasm. The catalysed reaction is O-phospho-L-serine + 2-oxoglutarate = 3-phosphooxypyruvate + L-glutamate. The enzyme catalyses 4-(phosphooxy)-L-threonine + 2-oxoglutarate = (R)-3-hydroxy-2-oxo-4-phosphooxybutanoate + L-glutamate. The protein operates within amino-acid biosynthesis; L-serine biosynthesis; L-serine from 3-phospho-D-glycerate: step 2/3. Its pathway is cofactor biosynthesis; pyridoxine 5'-phosphate biosynthesis; pyridoxine 5'-phosphate from D-erythrose 4-phosphate: step 3/5. Catalyzes the reversible conversion of 3-phosphohydroxypyruvate to phosphoserine and of 3-hydroxy-2-oxo-4-phosphonooxybutanoate to phosphohydroxythreonine. The chain is Phosphoserine aminotransferase from Stenotrophomonas maltophilia (strain K279a).